A 30-amino-acid polypeptide reads, in one-letter code: uncharacterized protein (30 aa).

A disordered region spans residues 1–30; sequence MHLSTLPNVPWPNRSFTTKRPPLPNMSFSW.

This is an uncharacterized protein from Saccharomyces cerevisiae (strain ATCC 204508 / S288c) (Baker's yeast).